Here is a 273-residue protein sequence, read N- to C-terminus: Putative B3 domain-containing protein At5g58280 (273 aa).

Residues 127–218 (FVKSMVRSHV…KFKIYVFKGN (92 aa)) constitute a DNA-binding region (TF-B3). The segment at 225-273 (SARKRGRATTPSEEEEEEEDKDVEESGDEEHSSRATKRSSVRLLRKRKA) is disordered. Over residues 236-252 (SEEEEEEEDKDVEESGD) the composition is skewed to acidic residues. Basic residues predominate over residues 258-273 (RATKRSSVRLLRKRKA).

The protein resides in the nucleus. This Arabidopsis thaliana (Mouse-ear cress) protein is Putative B3 domain-containing protein At5g58280.